We begin with the raw amino-acid sequence, 289 residues long: 4-diphosphocytidyl-2-C-methyl-D-erythritol kinase (289 aa).

Lysine 16 is an active-site residue. 99–109 (PMGGGLGGGSS) lines the ATP pocket. Residue aspartate 141 is part of the active site.

Belongs to the GHMP kinase family. IspE subfamily.

The catalysed reaction is 4-CDP-2-C-methyl-D-erythritol + ATP = 4-CDP-2-C-methyl-D-erythritol 2-phosphate + ADP + H(+). The protein operates within isoprenoid biosynthesis; isopentenyl diphosphate biosynthesis via DXP pathway; isopentenyl diphosphate from 1-deoxy-D-xylulose 5-phosphate: step 3/6. Its function is as follows. Catalyzes the phosphorylation of the position 2 hydroxy group of 4-diphosphocytidyl-2C-methyl-D-erythritol. The polypeptide is 4-diphosphocytidyl-2-C-methyl-D-erythritol kinase (Ralstonia pickettii (strain 12J)).